Here is a 341-residue protein sequence, read N- to C-terminus: Phenylalanine--tRNA ligase alpha subunit (341 aa).

E259 contributes to the Mg(2+) binding site.

The protein belongs to the class-II aminoacyl-tRNA synthetase family. Phe-tRNA synthetase alpha subunit type 1 subfamily. In terms of assembly, tetramer of two alpha and two beta subunits. Mg(2+) serves as cofactor.

It localises to the cytoplasm. It carries out the reaction tRNA(Phe) + L-phenylalanine + ATP = L-phenylalanyl-tRNA(Phe) + AMP + diphosphate + H(+). The sequence is that of Phenylalanine--tRNA ligase alpha subunit from Mycobacterium tuberculosis (strain ATCC 25177 / H37Ra).